Reading from the N-terminus, the 151-residue chain is Large ribosomal subunit protein uL22c (151 aa).

It belongs to the universal ribosomal protein uL22 family. As to quaternary structure, part of the 50S ribosomal subunit.

The protein localises to the plastid. It localises to the chloroplast. Functionally, this protein binds specifically to 23S rRNA. Its function is as follows. The globular domain of the protein is located near the polypeptide exit tunnel on the outside of the subunit, while an extended beta-hairpin is found that lines the wall of the exit tunnel in the center of the 70S ribosome. This Gossypium barbadense (Sea Island cotton) protein is Large ribosomal subunit protein uL22c (rpl22).